We begin with the raw amino-acid sequence, 1052 residues long: Kinesin-like protein KIF11 (1052 aa).

One can recognise a Kinesin motor domain in the interval 17–358; sequence NIQVVVRCRP…LEYAHRAKNI (342 aa). 104–111 is a binding site for ATP; the sequence is GQTGTGKT. Lysine 145 carries the post-translational modification N6-acetyllysine. Residues 364 to 478 adopt a coiled-coil conformation; the sequence is VNQKLTKKAL…ETKLQLVKEE (115 aa). Threonine 457 is subject to Phosphothreonine. Lysine 476 participates in a covalent cross-link: Glycyl lysine isopeptide (Lys-Gly) (interchain with G-Cter in SUMO2). Phosphothreonine is present on threonine 925. Disordered regions lie at residues 950-1026 and 1033-1052; these read LQKK…LNPV and EASDLSISKSRLPLHTSINL. Residues 963 to 988 are a coiled coil; that stretch reads EASKETSQDMDEEREALEQCTEELVS. Residues 1016–1026 show a composition bias toward basic and acidic residues; the sequence is KDKENRGLNPV.

Belongs to the TRAFAC class myosin-kinesin ATPase superfamily. Kinesin family. BimC subfamily. In terms of assembly, interacts with the thyroid hormone receptor in the presence of thyroid hormone. Component of a large chromatin remodeling complex, at least composed of MYSM1, PCAF, RBM10 and KIF11/TRIP5. Interacts with RARRES1 and AGBL2. Phosphorylated exclusively on serine during S phase, but on both serine and Thr-925 during mitosis, so controlling the association of KIF11 with the spindle apparatus (probably during early prophase).

It localises to the cytoplasm. The protein resides in the cytoskeleton. It is found in the spindle pole. Functionally, motor protein required for establishing a bipolar spindle during mitosis. Required in non-mitotic cells for transport of secretory proteins from the Golgi complex to the cell surface. The protein is Kinesin-like protein KIF11 (Kif11) of Mus musculus (Mouse).